Consider the following 310-residue polypeptide: tRNA dimethylallyltransferase (310 aa).

10-17 lines the ATP pocket; sequence GPTAVGKS. A substrate-binding site is contributed by 12–17; the sequence is TAVGKS. The interaction with substrate tRNA stretch occupies residues 35 to 38; that stretch reads DSMQ.

The protein belongs to the IPP transferase family. In terms of assembly, monomer. Requires Mg(2+) as cofactor.

It carries out the reaction adenosine(37) in tRNA + dimethylallyl diphosphate = N(6)-dimethylallyladenosine(37) in tRNA + diphosphate. Functionally, catalyzes the transfer of a dimethylallyl group onto the adenine at position 37 in tRNAs that read codons beginning with uridine, leading to the formation of N6-(dimethylallyl)adenosine (i(6)A). This Clostridium perfringens (strain SM101 / Type A) protein is tRNA dimethylallyltransferase.